The following is a 593-amino-acid chain: Histone-arginine methyltransferase CARMER (593 aa).

Positions Ala122 to Asp429 constitute an SAM-dependent MTase PRMT-type domain. The S-adenosyl-L-methionine site is built by Gln135, Arg144, Gly168, Glu190, Glu219, and Thr247. The residue at position 482 (Arg482) is an Asymmetric dimethylarginine; by autocatalysis. The interval Leu521 to Leu540 is disordered. Positions Ser523–Thr535 are enriched in low complexity.

It belongs to the class I-like SAM-binding methyltransferase superfamily. Protein arginine N-methyltransferase family. In terms of assembly, homodimer. In terms of processing, the dimethylated protein is the major form.

It localises to the cytoplasm. The protein resides in the nucleus. The catalysed reaction is L-arginyl-[protein] + 2 S-adenosyl-L-methionine = N(omega),N(omega)-dimethyl-L-arginyl-[protein] + 2 S-adenosyl-L-homocysteine + 2 H(+). Methylates (mono- and asymmetric dimethylation) the guanidino nitrogens of arginyl residues in proteins. May methylate histone H3 at 'Arg-17' and activate transcription via chromatin remodeling. This chain is Histone-arginine methyltransferase CARMER, found in Aedes aegypti (Yellowfever mosquito).